The following is a 507-amino-acid chain: Pyruvate kinase (507 aa).

Arg-50 lines the substrate pocket. K(+)-binding residues include Asn-52, Ser-54, Asp-84, and Thr-85. 52–55 lines the ATP pocket; it reads NFSH. 2 residues coordinate ATP: Arg-91 and Lys-177. Position 242 (Glu-242) interacts with Mg(2+). 3 residues coordinate substrate: Gly-265, Asp-266, and Thr-298. Asp-266 provides a ligand contact to Mg(2+).

This sequence belongs to the pyruvate kinase family. In terms of assembly, homotetramer. Requires Mg(2+) as cofactor. The cofactor is K(+).

It catalyses the reaction pyruvate + ATP = phosphoenolpyruvate + ADP + H(+). It participates in carbohydrate degradation; glycolysis; pyruvate from D-glyceraldehyde 3-phosphate: step 5/5. This chain is Pyruvate kinase (pyk), found in Dictyostelium discoideum (Social amoeba).